The chain runs to 138 residues: Large ribosomal subunit protein uL16 (138 aa).

A compositionally biased stretch (basic residues) spans 1–13 (MLQPARRKFRKEQ). A disordered region spans residues 1–22 (MLQPARRKFRKEQKGRNTGLAT).

This sequence belongs to the universal ribosomal protein uL16 family. Part of the 50S ribosomal subunit.

Its function is as follows. Binds 23S rRNA and is also seen to make contacts with the A and possibly P site tRNAs. This Thiobacillus denitrificans (strain ATCC 25259 / T1) protein is Large ribosomal subunit protein uL16.